Here is a 119-residue protein sequence, read N- to C-terminus: Large ribosomal subunit protein bL20 (119 aa).

This sequence belongs to the bacterial ribosomal protein bL20 family.

Functionally, binds directly to 23S ribosomal RNA and is necessary for the in vitro assembly process of the 50S ribosomal subunit. It is not involved in the protein synthesizing functions of that subunit. This is Large ribosomal subunit protein bL20 from Alkaliphilus metalliredigens (strain QYMF).